The primary structure comprises 471 residues: UDP-N-acetylmuramate--L-alanine ligase (471 aa).

Residue 114 to 120 (GTHGKTT) coordinates ATP.

Belongs to the MurCDEF family.

It localises to the cytoplasm. It catalyses the reaction UDP-N-acetyl-alpha-D-muramate + L-alanine + ATP = UDP-N-acetyl-alpha-D-muramoyl-L-alanine + ADP + phosphate + H(+). Its pathway is cell wall biogenesis; peptidoglycan biosynthesis. Cell wall formation. The chain is UDP-N-acetylmuramate--L-alanine ligase from Chlorobaculum parvum (strain DSM 263 / NCIMB 8327) (Chlorobium vibrioforme subsp. thiosulfatophilum).